A 391-amino-acid polypeptide reads, in one-letter code: Pectate lyase B (391 aa).

The signal sequence occupies residues 1–30; the sequence is MKKTVRSLCSTALALTLGFTLLSGPASVQA. Ca(2+) contacts are provided by Asp181, Asp203, and Asp207. The active site involves Arg305.

This sequence belongs to the polysaccharide lyase 1 family. Requires Ca(2+) as cofactor.

It is found in the secreted. The catalysed reaction is Eliminative cleavage of (1-&gt;4)-alpha-D-galacturonan to give oligosaccharides with 4-deoxy-alpha-D-galact-4-enuronosyl groups at their non-reducing ends.. It carries out the reaction Eliminative cleavage of (1-&gt;4)-alpha-D-galacturonan methyl ester to give oligosaccharides with 4-deoxy-6-O-methyl-alpha-D-galact-4-enuronosyl groups at their non-reducing ends.. The protein operates within glycan metabolism; pectin degradation. Functionally, catalyzes the depolymerization of both polygalacturonate and pectins of various methyl esterification degree, with an endo mode of action. Shows the highest activity on 20 to 34% methylated pectin but retains 67%, 51%, 25%, and 1% of its maximum activity on polygalacturonate and 8.5%, 55 to 70%, and 90% methylated pectin, respectively. The protein is Pectate lyase B of Paenibacillus amylolyticus.